The chain runs to 881 residues: Nitrate reductase [NADH] 1 (881 aa).

The tract at residues Met-1–Asn-46 is disordered. Cys-167 is a binding site for Mo-molybdopterin. The region spanning Thr-515–Met-590 is the Cytochrome b5 heme-binding domain. Residues His-550 and His-573 each coordinate heme. The FAD-binding FR-type domain occupies Arg-625 to Thr-737. FAD-binding positions include Arg-677–Thr-680, Val-694–Tyr-698, Phe-699, Phe-706, Ile-711–Ser-713, and Thr-764.

Belongs to the nitrate reductase family. As to quaternary structure, homodimer. Requires FAD as cofactor. It depends on heme as a cofactor. Mo-molybdopterin serves as cofactor.

The catalysed reaction is nitrite + NAD(+) + H2O = nitrate + NADH + H(+). In terms of biological role, nitrate reductase is a key enzyme involved in the first step of nitrate assimilation in plants, fungi and bacteria. This is Nitrate reductase [NADH] 1 (NIA1) from Phaseolus vulgaris (Kidney bean).